The chain runs to 1184 residues: DNA-directed RNA polymerase subunit beta' (1184 aa).

4 residues coordinate Zn(2+): Cys60, Cys62, Cys75, and Cys78. Mg(2+) is bound by residues Asp449, Asp451, and Asp453. Residues Cys794, Cys867, Cys874, and Cys877 each contribute to the Zn(2+) site. A disordered region spans residues 1165–1184; that stretch reads NDQQERQDKEKEETEVKASN.

It belongs to the RNA polymerase beta' chain family. The RNAP catalytic core consists of 2 alpha, 1 beta, 1 beta' and 1 omega subunit. When a sigma factor is associated with the core the holoenzyme is formed, which can initiate transcription. Mg(2+) is required as a cofactor. The cofactor is Zn(2+).

It catalyses the reaction RNA(n) + a ribonucleoside 5'-triphosphate = RNA(n+1) + diphosphate. Its function is as follows. DNA-dependent RNA polymerase catalyzes the transcription of DNA into RNA using the four ribonucleoside triphosphates as substrates. This Thermoanaerobacter pseudethanolicus (strain ATCC 33223 / 39E) (Clostridium thermohydrosulfuricum) protein is DNA-directed RNA polymerase subunit beta'.